The following is a 364-amino-acid chain: Triacylglycerol lipase (364 aa).

The first 44 residues, 1–44 (MARTMRSRVVAGAVACAMSIAPFAGTTAVMTLATTHAAMAATAP), serve as a signal peptide directing secretion. Residues 54–333 (PIILVHGLSG…TSYKWNHLDE (280 aa)) enclose the AB hydrolase-1 domain. L61 contributes to the substrate binding site. Catalysis depends on S131, which acts as the Nucleophile. Q132 contributes to the substrate binding site. A disulfide bridge links C234 with C314. A Ca(2+)-binding site is contributed by D286. Active-site charge relay system residues include D308 and H330. 3 residues coordinate Ca(2+): D332, Q336, and V340.

It belongs to the AB hydrolase superfamily. Pseudomonas lipase family. As to quaternary structure, monomer. Ca(2+) is required as a cofactor.

It is found in the secreted. It catalyses the reaction a triacylglycerol + H2O = a diacylglycerol + a fatty acid + H(+). Its function is as follows. Catalyzes the hydrolysis of triacylglycerol. This is Triacylglycerol lipase from Pseudomonas sp. (strain KWI-56).